We begin with the raw amino-acid sequence, 353 residues long: GTPase Obg (353 aa).

The Obg domain occupies 1–159; sequence MKFVDEVRIH…RDLVLELKLL (159 aa). One can recognise an OBG-type G domain in the interval 160-333; that stretch reads ADVGIVGYPN…LMDAVGRALY (174 aa). Residues 166 to 173, 191 to 195, 212 to 215, 283 to 286, and 314 to 316 contribute to the GTP site; these read GYPNAGKS, FTTLV, DIPG, TKID, and SAV. Mg(2+) contacts are provided by S173 and T193.

It belongs to the TRAFAC class OBG-HflX-like GTPase superfamily. OBG GTPase family. Monomer. The cofactor is Mg(2+).

The protein resides in the cytoplasm. Its function is as follows. An essential GTPase which binds GTP, GDP and possibly (p)ppGpp with moderate affinity, with high nucleotide exchange rates and a fairly low GTP hydrolysis rate. Plays a role in control of the cell cycle, stress response, ribosome biogenesis and in those bacteria that undergo differentiation, in morphogenesis control. This is GTPase Obg from Anaeromyxobacter sp. (strain Fw109-5).